A 203-amino-acid chain; its full sequence is Recombination protein RecR (203 aa).

The C4-type zinc finger occupies 58–73 (CDYCGNLDVVSICNIC). The Toprim domain maps to 81 to 177 (SIIAIVESVA…KISKLASGIP (97 aa)).

Belongs to the RecR family.

May play a role in DNA repair. It seems to be involved in an RecBC-independent recombinational process of DNA repair. It may act with RecF and RecO. The sequence is that of Recombination protein RecR from Orientia tsutsugamushi (strain Boryong) (Rickettsia tsutsugamushi).